A 594-amino-acid chain; its full sequence is Gamma-terpinene synthase, chloroplastic (594 aa).

The transit peptide at 1–44 (MATLSMQVSILSKEVKNVNNIGMRASKPMVARRVSTTRLRPICS) directs the protein to the chloroplast. Mn(2+)-binding residues include D347 and D351. The DDXXD motif signature appears at 347-351 (DDVYD). 2 homodimerization regions span residues 353-359 (YGTLDEL) and 425-462 (EAKWYYAGYTPTLAEYLENAKVSISSPTIISQVYFTLP). Mn(2+)-binding residues include D491 and E499.

Belongs to the terpene synthase family. As to quaternary structure, homodimer. The cofactor is Mn(2+). It depends on Mg(2+) as a cofactor. In terms of tissue distribution, expressed in peltate glandular trichomes.

The protein localises to the plastid. It is found in the chloroplast. The catalysed reaction is (2E)-geranyl diphosphate = gamma-terpinene + diphosphate. It carries out the reaction (2E)-geranyl diphosphate = alpha-terpinene + diphosphate. It functions in the pathway secondary metabolite biosynthesis; terpenoid biosynthesis. In terms of biological role, involved in the biosynthesis of phenolic monoterpenes natural products thymol and carvacrol which have a broad range of biological activities acting as antimicrobial compounds, insecticides, antioxidants and pharmaceutical agents. Monoterpene synthase which catalyzes the conversion of geranyl diphosphate (GPP) to gamma-terpinene and the minor products alpha-thujene, alpha-terpinene, myrcene, sabinene, (+)-R-limonene, alpha-pinene and alpha-phellandrene. This chain is Gamma-terpinene synthase, chloroplastic, found in Origanum vulgare (Wild marjoram).